Here is a 255-residue protein sequence, read N- to C-terminus: Putative oxidoreductase YtkK (255 aa).

7–14 (TAGSKGLG) lines the NAD(+) pocket.

Belongs to the short-chain dehydrogenases/reductases (SDR) family.

This chain is Putative oxidoreductase YtkK (ytkK), found in Bacillus subtilis (strain 168).